A 28-amino-acid polypeptide reads, in one-letter code: Potassium channel toxin alpha-KTx 9.7 (28 aa).

3 disulfides stabilise this stretch: C3/C19, C6/C24, and C10/C26.

As to expression, expressed by the venom gland.

It is found in the secreted. In terms of biological role, calcium channel activator. Rapidly and reversibly activates ryanodine receptor 1 (RYR1). This is Potassium channel toxin alpha-KTx 9.7 from Hottentotta judaicus (Black scorpion).